A 66-amino-acid chain; its full sequence is Cocaine- and amphetamine-regulated transcript protein (66 aa).

Cystine bridges form between cysteine 34–cysteine 52 and cysteine 40–cysteine 60.

It belongs to the CART family.

It localises to the secreted. Satiety factor closely associated with the actions of leptin and neuropeptide y; this anorectic peptide inhibits both normal and starvation-induced feeding and completely blocks the feeding response induced by neuropeptide Y and regulated by leptin in the hypothalamus. This is Cocaine- and amphetamine-regulated transcript protein (CARTPT) from Sus scrofa (Pig).